A 964-amino-acid chain; its full sequence is Reticulon-3 (964 aa).

Over residues Met-1–Ala-24 the composition is skewed to low complexity. Disordered regions lie at residues Met-1–Pro-32, Ala-68–Leu-109, and Trp-179–Ala-200. Ala-2 bears the N-acetylalanine mark. Over Ala-2–Thr-795 the chain is Cytoplasmic. Ser-31 bears the Phosphoserine mark. Residues Ser-80–Ser-91 show a composition bias toward low complexity. Ser-217, Ser-225, Ser-230, Ser-233, Ser-270, Ser-303, and Ser-429 each carry phosphoserine. The interval Ile-479–Ser-536 is disordered. The span at Thr-493–Met-511 shows a compositional bias: basic and acidic residues. The span at Glu-516 to Gln-527 shows a compositional bias: low complexity. Position 529 is a phosphoserine (Ser-529). Position 593 is a phosphothreonine (Thr-593). Phosphoserine is present on residues Ser-596, Ser-597, and Ser-673. Disordered regions lie at residues Glu-645–Pro-674 and Val-697–Asp-723. A compositionally biased stretch (polar residues) spans Phe-712–Asp-723. A Reticulon domain is found at Val-776–Glu-964. An intramembrane region (helical) is located at residues Leu-796–Leu-819. The Cytoplasmic portion of the chain corresponds to Ser-820–Leu-876. Positions Ile-877 to Met-899 form an intramembrane region, helical. Residues Thr-900 to Gly-903 are Cytoplasmic-facing. The helical intramembrane region spans Ala-904–Tyr-926. Residues Val-919–Glu-964 form an interaction with FADD region. Over Glu-927 to Glu-964 the chain is Cytoplasmic. The interaction with BACE1 stretch occupies residues Gln-932–Asp-934.

As to quaternary structure, homodimer. Interacts with RTN4. Isoform 3 interacts with BACE1, BACE2, BCL2 and FADD. Interacts with ATL1 and ATL2. Isoform 3 interacts with TMEM33. Interacts with ZFYVE27 and with KIF5A in a ZFYVE27-dependent manner. Interacts with RIGI. Interacts with TRIM25. In terms of tissue distribution, isoform 1, isoform 3, isoform 4 and isoform 5 are expressed in spinal cord. Isoform 1 is present in brain, where it is expressed in the neurons of cerebral cortex, hippocampus, hypothalamus and cerebellum (at protein level).

The protein resides in the endoplasmic reticulum membrane. It localises to the golgi apparatus membrane. In terms of biological role, may be involved in membrane trafficking in the early secretory pathway. Inhibits BACE1 activity and amyloid precursor protein processing. May induce caspase-8 cascade and apoptosis. May favor BCL2 translocation to the mitochondria upon endoplasmic reticulum stress. Induces the formation of endoplasmic reticulum tubules. Also acts as an inflammation-resolving regulator by interacting with both TRIM25 and RIGI, subsequently impairing RIGI 'Lys-63'-linked polyubiquitination leading to IRF3 and NF-kappa-B inhibition. The polypeptide is Reticulon-3 (Rtn3) (Mus musculus (Mouse)).